Consider the following 608-residue polypeptide: Nuclear protein localization protein 4 homolog (608 aa).

A2 is subject to N-acetylalanine. K179 bears the N6-acetyllysine mark. An MPN domain is found at 226–363; it reads IMFENHTVAD…ICRLSPDGHF (138 aa). A RanBP2-type zinc finger spans residues 580-608; it reads TSAMWACQHCTFMNQPGTGHCEMCSLPRT.

This sequence belongs to the NPL4 family. Heterodimer with UFD1. The heterodimer binds ubiquitinated proteins. The heterodimer binds to VCP and inhibits Golgi membrane fusion. Interacts with ZFAND2B; probably through VCP.

The protein localises to the cytoplasm. Its subcellular location is the cytosol. It is found in the endoplasmic reticulum. The protein resides in the nucleus. Its pathway is protein degradation; proteasomal ubiquitin-dependent pathway. The ternary complex containing UFD1, VCP and NPLOC4 binds ubiquitinated proteins and is necessary for the export of misfolded proteins from the ER to the cytoplasm, where they are degraded by the proteasome. The NPLOC4-UFD1-VCP complex regulates spindle disassembly at the end of mitosis and is necessary for the formation of a closed nuclear envelope. Acts as a negative regulator of type I interferon production via the complex formed with VCP and UFD1, which binds to RIGI and recruits RNF125 to promote ubiquitination and degradation of RIGI. This chain is Nuclear protein localization protein 4 homolog (Nploc4), found in Mus musculus (Mouse).